A 322-amino-acid polypeptide reads, in one-letter code: Phosphatidylserine decarboxylase proenzyme (322 aa).

Catalysis depends on charge relay system; for autoendoproteolytic cleavage activity residues Asp90, His147, and Ser254. The Schiff-base intermediate with substrate; via pyruvic acid; for decarboxylase activity role is filled by Ser254. Position 254 is a pyruvic acid (Ser); by autocatalysis (Ser254). Residues 295–322 (VEPAPLPTEEIKAEHDASPLVDNKKDDT) form a disordered region. Basic and acidic residues predominate over residues 303-322 (EEIKAEHDASPLVDNKKDDT).

It belongs to the phosphatidylserine decarboxylase family. PSD-B subfamily. Prokaryotic type I sub-subfamily. As to quaternary structure, heterodimer of a large membrane-associated beta subunit and a small pyruvoyl-containing alpha subunit. Requires pyruvate as cofactor. In terms of processing, is synthesized initially as an inactive proenzyme. Formation of the active enzyme involves a self-maturation process in which the active site pyruvoyl group is generated from an internal serine residue via an autocatalytic post-translational modification. Two non-identical subunits are generated from the proenzyme in this reaction, and the pyruvate is formed at the N-terminus of the alpha chain, which is derived from the carboxyl end of the proenzyme. The autoendoproteolytic cleavage occurs by a canonical serine protease mechanism, in which the side chain hydroxyl group of the serine supplies its oxygen atom to form the C-terminus of the beta chain, while the remainder of the serine residue undergoes an oxidative deamination to produce ammonia and the pyruvoyl prosthetic group on the alpha chain. During this reaction, the Ser that is part of the protease active site of the proenzyme becomes the pyruvoyl prosthetic group, which constitutes an essential element of the active site of the mature decarboxylase.

The protein resides in the cell membrane. The catalysed reaction is a 1,2-diacyl-sn-glycero-3-phospho-L-serine + H(+) = a 1,2-diacyl-sn-glycero-3-phosphoethanolamine + CO2. The protein operates within phospholipid metabolism; phosphatidylethanolamine biosynthesis; phosphatidylethanolamine from CDP-diacylglycerol: step 2/2. Catalyzes the formation of phosphatidylethanolamine (PtdEtn) from phosphatidylserine (PtdSer). In Salmonella agona (strain SL483), this protein is Phosphatidylserine decarboxylase proenzyme.